Reading from the N-terminus, the 409-residue chain is Type II methyltransferase M.BsuFI (409 aa).

The 302-residue stretch at 101–402 folds into the SAM-dependent MTase C5-type domain; that stretch reads LTFIDLFAGI…GAMKERLLLA (302 aa). Cysteine 170 is a catalytic residue.

Belongs to the class I-like SAM-binding methyltransferase superfamily. C5-methyltransferase family.

The catalysed reaction is a 2'-deoxycytidine in DNA + S-adenosyl-L-methionine = a 5-methyl-2'-deoxycytidine in DNA + S-adenosyl-L-homocysteine + H(+). A methylase, recognizes the double-stranded sequence 5'-CCGG-3', methylates C-1 on both strands, and protects the DNA from cleavage by the BsuFI endonuclease. This Bacillus subtilis protein is Type II methyltransferase M.BsuFI (hsdFM).